Consider the following 178-residue polypeptide: ATP-dependent protease subunit HslV (178 aa).

Thr-7 is an active-site residue. The Na(+) site is built by Gly-162, Cys-165, and Thr-168.

It belongs to the peptidase T1B family. HslV subfamily. In terms of assembly, a double ring-shaped homohexamer of HslV is capped on each side by a ring-shaped HslU homohexamer. The assembly of the HslU/HslV complex is dependent on binding of ATP.

It localises to the cytoplasm. The catalysed reaction is ATP-dependent cleavage of peptide bonds with broad specificity.. Its activity is regulated as follows. Allosterically activated by HslU binding. Protease subunit of a proteasome-like degradation complex believed to be a general protein degrading machinery. This Leptothrix cholodnii (strain ATCC 51168 / LMG 8142 / SP-6) (Leptothrix discophora (strain SP-6)) protein is ATP-dependent protease subunit HslV.